The primary structure comprises 20 residues: Putative beta-neurotoxin (20 aa).

The LCN-type CS-alpha/beta domain maps to 1-20 (KDGYLVGSDGCKYSCLTRPG).

As to expression, expressed by the venom gland.

It localises to the secreted. Functionally, beta toxins bind voltage-independently at site-4 of sodium channels (Nav) and shift the voltage of activation toward more negative potentials thereby affecting sodium channel activation and promoting spontaneous and repetitive firing. This Tityus pachyurus (Colombian scorpion) protein is Putative beta-neurotoxin.